A 127-amino-acid polypeptide reads, in one-letter code: Small ribosomal subunit protein uS11 (127 aa).

The protein belongs to the universal ribosomal protein uS11 family. As to quaternary structure, part of the 30S ribosomal subunit. Interacts with proteins S7 and S18. Binds to IF-3.

Functionally, located on the platform of the 30S subunit, it bridges several disparate RNA helices of the 16S rRNA. Forms part of the Shine-Dalgarno cleft in the 70S ribosome. In Chlorobium phaeobacteroides (strain DSM 266 / SMG 266 / 2430), this protein is Small ribosomal subunit protein uS11.